Reading from the N-terminus, the 58-residue chain is SPbeta prophage-derived uncharacterized protein YotN (58 aa).

The chain is SPbeta prophage-derived uncharacterized protein YotN (yotN) from Bacillus subtilis (strain 168).